Reading from the N-terminus, the 125-residue chain is uncharacterized protein (125 aa).

Disordered stretches follow at residues 1–27 (MNKT…GSSS) and 76–125 (NKNN…RFKK). The span at 18–27 (GMNSTTGSSS) shows a compositional bias: low complexity.

This is an uncharacterized protein from Dictyostelium discoideum (Social amoeba).